Reading from the N-terminus, the 380-residue chain is Cytochrome b (380 aa).

The next 4 membrane-spanning stretches (helical) occupy residues 34–54 (FGSL…LLAA), 78–99 (WLIR…YLHI), 114–134 (WNTG…GYVL), and 179–199 (FFTL…IHLT). Positions 84 and 98 each coordinate heme b. 2 residues coordinate heme b: histidine 183 and histidine 197. Histidine 202 provides a ligand contact to a ubiquinone. 4 helical membrane-spanning segments follow: residues 227 to 247 (LKDI…ALFS), 289 to 309 (LGGV…PLLH), 321 to 341 (FSQL…WVGS), and 348 to 368 (FIII…ILFP).

This sequence belongs to the cytochrome b family. The cytochrome bc1 complex contains 11 subunits: 3 respiratory subunits (MT-CYB, CYC1 and UQCRFS1), 2 core proteins (UQCRC1 and UQCRC2) and 6 low-molecular weight proteins (UQCRH/QCR6, UQCRB/QCR7, UQCRQ/QCR8, UQCR10/QCR9, UQCR11/QCR10 and a cleavage product of UQCRFS1). This cytochrome bc1 complex then forms a dimer. Heme b serves as cofactor.

Its subcellular location is the mitochondrion inner membrane. Component of the ubiquinol-cytochrome c reductase complex (complex III or cytochrome b-c1 complex) that is part of the mitochondrial respiratory chain. The b-c1 complex mediates electron transfer from ubiquinol to cytochrome c. Contributes to the generation of a proton gradient across the mitochondrial membrane that is then used for ATP synthesis. The polypeptide is Cytochrome b (MT-CYB) (Antigone vipio (White-naped crane)).